We begin with the raw amino-acid sequence, 292 residues long: Acetyl-coenzyme A carboxylase carboxyl transferase subunit beta (292 aa).

Residues 36–292 form the CoA carboxyltransferase N-terminal domain; that stretch reads MWSKCEKCAK…LLRMHEVDYE (257 aa). Positions 40, 43, 59, and 62 each coordinate Zn(2+). A C4-type zinc finger spans residues 40–62; that stretch reads CEKCAKILYTEDLRENFNVCPNC.

It belongs to the AccD/PCCB family. In terms of assembly, acetyl-CoA carboxylase is a heterohexamer composed of biotin carboxyl carrier protein (AccB), biotin carboxylase (AccC) and two subunits each of ACCase subunit alpha (AccA) and ACCase subunit beta (AccD). Zn(2+) is required as a cofactor.

Its subcellular location is the cytoplasm. It carries out the reaction N(6)-carboxybiotinyl-L-lysyl-[protein] + acetyl-CoA = N(6)-biotinyl-L-lysyl-[protein] + malonyl-CoA. The protein operates within lipid metabolism; malonyl-CoA biosynthesis; malonyl-CoA from acetyl-CoA: step 1/1. In terms of biological role, component of the acetyl coenzyme A carboxylase (ACC) complex. Biotin carboxylase (BC) catalyzes the carboxylation of biotin on its carrier protein (BCCP) and then the CO(2) group is transferred by the transcarboxylase to acetyl-CoA to form malonyl-CoA. This chain is Acetyl-coenzyme A carboxylase carboxyl transferase subunit beta, found in Clostridium perfringens (strain 13 / Type A).